The chain runs to 413 residues: Putative competence-damage inducible protein (413 aa).

The protein belongs to the CinA family.

This Desulforudis audaxviator (strain MP104C) protein is Putative competence-damage inducible protein.